The chain runs to 301 residues: uncharacterized protein (301 aa).

Residues glutamate 146, glutamate 148, and aspartate 177 each contribute to the a divalent metal cation site.

This sequence belongs to the FAH family.

This is an uncharacterized protein from Staphylococcus epidermidis (strain ATCC 12228 / FDA PCI 1200).